We begin with the raw amino-acid sequence, 304 residues long: tRNA pseudouridine synthase B (304 aa).

The active-site Nucleophile is D48.

It belongs to the pseudouridine synthase TruB family. Type 1 subfamily.

The catalysed reaction is uridine(55) in tRNA = pseudouridine(55) in tRNA. Responsible for synthesis of pseudouridine from uracil-55 in the psi GC loop of transfer RNAs. The protein is tRNA pseudouridine synthase B of Pseudomonas aeruginosa (strain UCBPP-PA14).